Here is a 118-residue protein sequence, read N- to C-terminus: MAAINKTKGSADRIKMKIRKGDTVQVISGKDKGKTGEVLKTLPYENRVLVQGINQRTKHVKPSQEGETGRIETKEFPLHASNVMIYSTKEKVASKVEIFVDKDGSKKRRLKKTGELID.

It belongs to the universal ribosomal protein uL24 family. In terms of assembly, part of the 50S ribosomal subunit.

One of two assembly initiator proteins, it binds directly to the 5'-end of the 23S rRNA, where it nucleates assembly of the 50S subunit. In terms of biological role, one of the proteins that surrounds the polypeptide exit tunnel on the outside of the subunit. In Prochlorococcus marinus (strain NATL1A), this protein is Large ribosomal subunit protein uL24.